The chain runs to 285 residues: Para-Rep C6 (285 aa).

Residues 3 to 99 enclose the CRESS-DNA virus Rep endonuclease domain; it reads TRQSTSWVFT…VAGPWEYGLF (97 aa). An RCR-1 motif is present at residues 10 to 13; sequence VFTL. 2 residues coordinate a divalent metal cation: glutamate 36 and histidine 42. Positions 42-44 match the RCR-2 motif; sequence HLQ. Positions 52–74 match the Nuclear localization signal motif; that stretch reads RNTTLRQAKYIFNGLNPHLEIAR. Tyrosine 82 functions as the For DNA cleavage activity in the catalytic mechanism. The RCR-3 motif lies at 82–85; it reads YAMK. Residue aspartate 87 participates in a divalent metal cation binding. The short motif at 99-105 is the Nuclear localization signal element; the sequence is FIKRGSH. 175–183 contributes to the ATP binding site; that stretch reads GPAGNEGKS.

It belongs to the nanoviridea/circoviridae replication-associated protein family. As to quaternary structure, homooligomer (Potential). Rep binds to repeated DNA motifs (iterons). The cofactor is Mg(2+). Mn(2+) serves as cofactor.

It is found in the host nucleus. It catalyses the reaction ATP + H2O = ADP + phosphate + H(+). Functionally, initiates and terminates the replication only of its own subviral DNA molecule. The closed circular ssDNA genome is first converted to a superhelical dsDNA. Rep binds a specific hairpin at the genome origin of replication. Introduces an endonucleolytic nick within the intergenic region of the genome, thereby initiating the rolling circle replication (RCR). Following cleavage, binds covalently to the 5'-phosphate of DNA as a tyrosyl ester. The cleavage gives rise to a free 3'-OH that serves as a primer for the cellular DNA polymerase. The polymerase synthesizes the (+) strand DNA by rolling circle mechanism. After one round of replication, a Rep-catalyzed nucleotidyl transfer reaction releases a circular single-stranded virus genome, thereby terminating the replication. Displays origin-specific DNA cleavage, nucleotidyl transferase, ATPase and helicase activities. In Subterranean clover stunt C6 alphasatellite (SCSC6A), this protein is Para-Rep C6 (C6).